Consider the following 925-residue polypeptide: MATPSMMPQWSYMHIAGQDASEYLSPGLVQFARATDTYFSLGNKFRNPTVAPTHDVTTDRSQRLTLRFVPVDREDTAYSYKVRFTLAVGDNRVLDMASTYFDIRGVLDRGPSFKPYSGTAYNSLAPKTAPNPCEWKDNNKIKVRGQAPFIGTNINKDNGIQIGTDTTNQPIYADKTYQPEPQVGQTQWNSEVGAAQKVAGRVLKDTTPMLPCYGSYAKPTNEKGGQASLITNGTDQTLTSDVNLQFFALPSTPNEPKAVLYAENVSIEAPDTHLVYKPDVAQGTISSADLLTQQAAPNRPNYIGFRDNFIGLMYYNSTGNMGVLAGQASQLNAVVDLQDRNTELSYQLMLDALGDRSRYFSMWNQAVDSYDPDVRIIENHGVEDELPNYCFPLGGSAATDTYSGIKANGQTWTADDNYADRGAEIESGNIFAMEINLAANLWRSFLYSNVALYLPDSYKITPDNITLPENKNTYAYMNGRVAVPSALDTYVNIGARWSPDPMDNVNPFNHHRNAGLRYRSMLLGNGRYVPFHIQVPQKFFAIKNLLLLPGSYTYEWNFRKDVNMILQSSLGNDLRVDGASVRFDSINLYANFFPMAHNTASTLEAMLRNDTNDQSFNDYLCAANMLYPIPSNATSVPISIPSRNWAAFRGWSFTRLKTKETPSLGSGFDPYFTYSGSVPYLDGTFYLNHTFKKVSIMFDSSVSWPGNDRLLTPNEFEIKRTVDGEGYNVAQCNMTKDWFLIQMLSHYNIGYQGFYVPESYKDRMYSFFRNFQPMSRQVVNTTTYKEYQNVTLPFQHNNSGFVGYMGPTMREGQAYPANYPYPLIGQTAVPSLTQKKFLCDRTMWRIPFSSNFMSMGALTDLGQNMLYANSAHALDMTFEVDPMDEPTLLYVLFEVFDVVRIHQPHRGVIEAVYLRTPFSAGNATT.

A2 carries the N-acetylalanine; by host modification. Y913 carries the phosphotyrosine; by host modification.

The protein belongs to the adenoviridae hexon protein family. In terms of assembly, homotrimer. Interacts with the capsid vertex protein; this interaction binds the peripentonal hexons to the neighboring penton base. Interacts with the hexon-linking protein; this interaction tethers the hexons surrounding the penton to those situated in the central plate of the facet. Interacts with the hexon-interlacing protein; this interaction lashes the hexons together. Interacts with host dyneins DYNC1LI1 and DYNC1I2; this interaction might be involved in intracellular microtubule-dependent transport of incoming viral capsid. Interacts with the shutoff protein; this interaction allows folding and formation of hexons trimers. Interacts with pre-protein VI; this interaction probably allows nuclear import of hexon trimers and possibly pre-capsid assembly.

The protein resides in the virion. It is found in the host nucleus. Functionally, major capsid protein that self-associates to form 240 hexon trimers, each in the shape of a hexagon, building most of the pseudo T=25 capsid. Assembled into trimeric units with the help of the chaperone shutoff protein. Transported by pre-protein VI to the nucleus where it associates with other structural proteins to form an empty capsid. Might be involved, through its interaction with host dyneins, in the intracellular microtubule-dependent transport of incoming viral capsid to the nucleus. The polypeptide is Hexon protein (Human adenovirus F serotype 41 (HAdV-41)).